Reading from the N-terminus, the 678-residue chain is uncharacterized protein (678 aa).

2 disordered regions span residues 123-156 (TPLS…TDSV) and 381-417 (TETT…TEHS).

The protein resides in the cytoplasm. This is an uncharacterized protein from Schizosaccharomyces pombe (strain 972 / ATCC 24843) (Fission yeast).